Here is an 827-residue protein sequence, read N- to C-terminus: uncharacterized protein (827 aa).

This is an uncharacterized protein from Methanocaldococcus jannaschii (strain ATCC 43067 / DSM 2661 / JAL-1 / JCM 10045 / NBRC 100440) (Methanococcus jannaschii).